The following is a 73-amino-acid chain: UPF0346 protein LVIS_0790 (73 aa).

Belongs to the UPF0346 family.

The chain is UPF0346 protein LVIS_0790 from Levilactobacillus brevis (strain ATCC 367 / BCRC 12310 / CIP 105137 / JCM 1170 / LMG 11437 / NCIMB 947 / NCTC 947) (Lactobacillus brevis).